Consider the following 351-residue polypeptide: MTQSVPLLLRAARGENVDRPPVWMMRQAGRYMKVYRDLRDKYPSFRERSENPDLSYEISMQPFRAFKPDGVILFSDILTPLPGMGIDFDIVESKGPLIKDPIRNESQIKTLRALSPSESCPFVGEVLKRLRDSVGNEAAVLGFVGAPWTLAAYVVEGKSSKNYAVIKAMAFQEPELLHKLLDHFADSIANYLCYQIDSGAQVVQMFDSWAGQLSPIDYETFAAPYQKKVIDLVKKTHPETPMILYISGSAGVLERMGRTGVDIVSLDWTVDMAEGCARLPQNVGIQGNVDPGLLFGSPESIRARIIDTVKKAKGRKFILNLGHGILPGTPEENARVFFEAGKSVNELISQT.

Residues 26 to 30 (RQAGR), Asp76, Tyr153, Ser208, and His323 contribute to the substrate site.

Belongs to the uroporphyrinogen decarboxylase family. As to quaternary structure, homodimer.

The protein localises to the cytoplasm. The catalysed reaction is uroporphyrinogen III + 4 H(+) = coproporphyrinogen III + 4 CO2. The protein operates within porphyrin-containing compound metabolism; protoporphyrin-IX biosynthesis; coproporphyrinogen-III from 5-aminolevulinate: step 4/4. Its function is as follows. Catalyzes the decarboxylation of four acetate groups of uroporphyrinogen-III to yield coproporphyrinogen-III. The protein is Uroporphyrinogen decarboxylase of Prochlorococcus marinus (strain MIT 9211).